Here is a 155-residue protein sequence, read N- to C-terminus: Ribonuclease H (155 aa).

The 142-residue stretch at 1 to 142 (MLKQVEIFTD…CDELARAAAS (142 aa)) folds into the RNase H type-1 domain. Residues D10, E48, D70, and D134 each contribute to the Mg(2+) site.

Belongs to the RNase H family. In terms of assembly, monomer. Requires Mg(2+) as cofactor.

It is found in the cytoplasm. The enzyme catalyses Endonucleolytic cleavage to 5'-phosphomonoester.. In terms of biological role, endonuclease that specifically degrades the RNA of RNA-DNA hybrids. In Klebsiella pneumoniae subsp. pneumoniae (strain ATCC 700721 / MGH 78578), this protein is Ribonuclease H.